We begin with the raw amino-acid sequence, 2322 residues long: MQSGPRPPLPAPGLALALTLTMLARLASAASFFGENHLEVPVATALTDIDLQLQFSTSQPEALLLLAAGPADHLLLQLYSGRLQVRLVLGQEELRLQTPAETLLSDSIPHTVVLTVVEGWATLSVDGFLNASSAVPGAPLEVPYGLFVGGTGTLGLPYLRGTSRPLRGCLHAATLNGRSLLRPLTPDVHEGCAEEFSASDDVALGFSGPHSLAAFPAWGTQDEGTLEFTLTTQSRQAPLAFQAGGRRGDFIYVDIFEGHLRAVVEKGQGTVLLHNSVPVADGQPHEVSVHINAHRLEISVDQYPTHTSNRGVLSYLEPRGSLLLGGLDAEASRHLQEHRLGLTPEATNASLLGCMEDLSVNGQRRGLREALLTRNMAAGCRLEEEEYEDDAYGHYEAFSTLAPEAWPAMELPEPCVPEPGLPPVFANFTQLLTISPLVVAEGGTAWLEWRHVQPTLDLMEAELRKSQVLFSVTRGARHGELELDIPGAQARKMFTLLDVVNRKARFIHDGSEDTSDQLVLEVSVTARVPMPSCLRRGQTYLLPIQVNPVNDPPHIIFPHGSLMVILEHTQKPLGPEVFQAYDPDSACEGLTFQVLGTSSGLPVERRDQPGEPATEFSCRELEAGSLVYVHRGGPAQDLTFRVSDGLQASPPATLKVVAIRPAIQIHRSTGLRLAQGSAMPILPANLSVETNAVGQDVSVLFRVTGALQFGELQKQGAGGVEGAEWWATQAFHQRDVEQGRVRYLSTDPQHHAYDTVENLALEVQVGQEILSNLSFPVTIQRATVWMLRLEPLHTQNTQQETLTTAHLEATLEEAGPSPPTFHYEVVQAPRKGNLQLQGTRLSDGQGFTQDDIQAGRVTYGATARASEAVEDTFRFRVTAPPYFSPLYTFPIHIGGDPDAPVLTNVLLVVPEGGEGVLSADHLFVKSLNSASYLYEVMERPRHGRLAWRGTQDKTTMVTSFTNEDLLRGRLVYQHDDSETTEDDIPFVATRQGESSGDMAWEEVRGVFRVAIQPVNDHAPVQTISRIFHVARGGRRLLTTDDVAFSDADSGFADAQLVLTRKDLLFGSIVAVDEPTRPIYRFTQEDLRKRRVLFVHSGADRGWIQLQVSDGQHQATALLEVQASEPYLRVANGSSLVVPQGGQGTIDTAVLHLDTNLDIRSGDEVHYHVTAGPRWGQLVRAGQPATAFSQQDLLDGAVLYSHNGSLSPRDTMAFSVEAGPVHTDATLQVTIALEGPLAPLKLVRHKKIYVFQGEAAEIRRDQLEAAQEAVPPADIVFSVKSPPSAGYLVMVSRGALADEPPSLDPVQSFSQEAVDTGRVLYLHSRPEAWSDAFSLDVASGLGAPLEGVLVELEVLPAAIPLEAQNFSVPEGGSLTLAPPLLRVSGPYFPTLLGLSLQVLEPPQHGALQKEDGPQARTLSAFSWRMVEEQLIRYVHDGSETLTDSFVLMANASEMDRQSHPVAFTVTVLPVNDQPPILTTNTGLQMWEGATAPIPAEALRSTDGDSGSEDLVYTIEQPSNGRVVLRGAPGTEVRSFTQAQLDGGLVLFSHRGTLDGGFRFRLSDGEHTSPGHFFRVTAQKQVLLSLKGSQTLTVCPGSVQPLSSQTLRASSSAGTDPQLLLYRVVRGPQLGRLFHAQQDSTGEALVNFTQAEVYAGNILYEHEMPPEPFWEAHDTLELQLSSPPARDVAATLAVAVSFEAACPQRPSHLWKNKGLWVPEGQRARITVAALDASNLLASVPSPQRSEHDVLFQVTQFPSRGQLLVSEEPLHAGQPHFLQSQLAAGQLVYAHGGGGTQQDGFHFRAHLQGPAGASVAGPQTSEAFAITVRDVNERPPQPQASVPLRLTRGSRAPISRAQLSVVDPDSAPGEIEYEVQRAPHNGFLSLVGGGLGPVTRFTQADVDSGRLAFVANGSSVAGIFQLSMSDGASPPLPMSLAVDILPSAIEVQLRAPLEVPQALGRSSLSQQQLRVVSDREEPEAAYRLIQGPQYGHLLVGGRPTSAFSQFQIDQGEVVFAFTNFSSSHDHFRVLALARGVNASAVVNVTVRALLHVWAGGPWPQGATLRLDPTVLDAGELANRTGSVPRFRLLEGPRHGRVVRVPRARTEPGGSQLVEQFTQQDLEDGRLGLEVGRPEGRAPGPAGDSLTLELWAQGVPPAVASLDFATEPYNAARPYSVALLSVPEAARTEAGKPESSTPTGEPGPMASSPEPAVAKGGFLSFLEANMFSVIIPMCLVLLLLALILPLLFYLRKRNKTGKHDVQVLTAKPRNGLAGDTETFRKVEPGQAIPLTAVPGQGPPPGGQPDPELLQFCRTPNPALKNGQYWV.

The first 29 residues, 1–29 (MQSGPRPPLPAPGLALALTLTMLARLASA), serve as a signal peptide directing secretion. 2 consecutive Laminin G-like domains span residues 30 to 192 (ASFF…HEGC) and 202 to 380 (VALG…AAGC). Residues 30–639 (ASFFGENHLE…HRGGPAQDLT (610 aa)) are globular or compact configuration stabilized by disulfide bonds. The segment at 30 to 639 (ASFFGENHLE…HRGGPAQDLT (610 aa)) is neurite growth inhibition. The Extracellular portion of the chain corresponds to 30 to 2224 (ASFFGENHLE…LSFLEANMFS (2195 aa)). Asn-130 is a glycosylation site (N-linked (GlcNAc...) asparagine). Cys-169 and Cys-192 are joined by a disulfide. Residue Asn-348 is glycosylated (N-linked (GlcNAc...) asparagine). An intrachain disulfide couples Cys-354 to Cys-380. Asn-427 carries an N-linked (GlcNAc...) asparagine glycan. CSPG repeat units follow at residues 428 to 523 (FTQL…LEVS), 553 to 645 (PHII…VSDG), and 662 to 764 (AIQI…LEVQ). The interval 574-1040 (GPEVFQAYDP…RGGRRLLTTD (467 aa)) is interaction with COL6A2. The segment at 631–1446 (RGGPAQDLTF…SETLTDSFVL (816 aa)) is interaction with COL5A1. Residues Asn-685 and Asn-772 are each glycosylated (N-linked (GlcNAc...) asparagine). 2 CSPG repeats span residues 783-878 (TVWM…FRVT) and 898-989 (DAPV…FVAT). The O-linked (Xyl...) (chondroitin sulfate) serine glycan is linked to Ser-995. CSPG repeat units lie at residues 1018–1110 (APVQ…VSDG), 1126–1216 (YLRV…FSVE), 1238–1337 (PLKL…LDVA), 1356–1449 (AAIP…LMAN), 1473–1563 (PPIL…LSDG), 1581–1679 (LLSL…LQLS), 1704–1803 (PSHL…FRAH), 1832–1924 (PPQP…MSDG), and 1941–2029 (AIEV…VLAL). N-linked (GlcNAc...) asparagine glycans are attached at residues Asn-1131 and Asn-1202. 2 N-linked (GlcNAc...) asparagine glycosylation sites follow: Asn-1364 and Asn-1449. The segment at 1586-2221 (GSQTLTVCPG…GGFLSFLEAN (636 aa)) is neurite growth inhibition. The segment at 1587-2221 (SQTLTVCPGS…GGFLSFLEAN (635 aa)) is cysteine-containing. The N-linked (GlcNAc...) asparagine glycan is linked to Asn-1645. Residues Asn-1909, Asn-2016, Asn-2034, Asn-2040, and Asn-2075 are each glycosylated (N-linked (GlcNAc...) asparagine). A CSPG 15 repeat occupies 2038–2147 (VVNVTVRALL…AGDSLTLELW (110 aa)). The interval 2182–2206 (ARTEAGKPESSTPTGEPGPMASSPE) is disordered. A helical transmembrane segment spans residues 2225-2245 (VIIPMCLVLLLLALILPLLFY). At 2246-2322 (LRKRNKTGKH…PALKNGQYWV (77 aa)) the chain is on the cytoplasmic side. Thr-2252 is modified (phosphothreonine; by PKC/PRKCA). Residues 2320–2322 (YWV) carry the PDZ-binding motif.

As to quaternary structure, interacts with the first PDZ domain of MPDZ. Interacts with PRKCA. Binds TNC, laminin-1, COL5A1 and COL6A2. Interacts with PLG and angiostatin. Binds FGF2 and PDGFA. Interacts with GRIP1, GRIP2 and GRIA2. Forms a ternary complex with GRIP1 and GRIA2. Interacts with LGALS3 and the integrin composed of ITGB1 and ITGA3. Interacts with ITGA4 through its chondroitin sulfate glycosaminoglycan. Interacts with BCAR1, CDC42 and ACK1. Interacts with MMP16. In terms of assembly, (Microbial infection) Interacts with C.difficile toxin TcdB, suggesting that it may act as a receptor for TcdB. In terms of processing, O-glycosylated; contains glycosaminoglycan chondroitin sulfate which are required for proper localization and function in stress fiber formation. Involved in interaction with MMP16 and ITGA4. Post-translationally, phosphorylation by PRKCA regulates its subcellular location and function in cell motility. As to expression, detected in fibroblasts (at protein level). Detected in placenta (at protein level). Detected in malignant melanoma cells.

The protein resides in the cell membrane. The protein localises to the apical cell membrane. It is found in the cell projection. It localises to the lamellipodium membrane. Its subcellular location is the cell surface. Functionally, proteoglycan playing a role in cell proliferation and migration which stimulates endothelial cells motility during microvascular morphogenesis. May also inhibit neurite outgrowth and growth cone collapse during axon regeneration. Cell surface receptor for collagen alpha 2(VI) which may confer cells ability to migrate on that substrate. Binds through its extracellular N-terminus growth factors, extracellular matrix proteases modulating their activity. May regulate MPP16-dependent degradation and invasion of type I collagen participating in melanoma cells invasion properties. May modulate the plasminogen system by enhancing plasminogen activation and inhibiting angiostatin. Also functions as a signal transducing protein by binding through its cytoplasmic C-terminus scaffolding and signaling proteins. May promote retraction fiber formation and cell polarization through Rho GTPase activation. May stimulate alpha-4, beta-1 integrin-mediated adhesion and spreading by recruiting and activating a signaling cascade through CDC42, ACK1 and BCAR1. May activate FAK and ERK1/ERK2 signaling cascades. This is Chondroitin sulfate proteoglycan 4 (CSPG4) from Homo sapiens (Human).